Here is a 522-residue protein sequence, read N- to C-terminus: Ribonuclease Y (522 aa).

The chain crosses the membrane as a helical span at residues 7–23; it reads SGSSAAVISGLVGFYIS. One can recognise a KH domain in the interval 212–278; that stretch reads LTNLVHLNDD…TKTLELLIQD (67 aa). Residues 338-431 enclose the HD domain; it reads ALSHTLEVAH…VCAADALSAA (94 aa).

Belongs to the RNase Y family.

Its subcellular location is the cell membrane. Its function is as follows. Endoribonuclease that initiates mRNA decay. The protein is Ribonuclease Y of Sulfurimonas denitrificans (strain ATCC 33889 / DSM 1251) (Thiomicrospira denitrificans (strain ATCC 33889 / DSM 1251)).